We begin with the raw amino-acid sequence, 114 residues long: MDNMDEIIKEAVIYKRLAHGIYGQLGGDHYAVQVTTISGKKFIIHSTPEHGTVITDVTLSNKWTLVERIKITNQKTVKKLFKEISGKTTIKFVNYVTSGTCIGTTQHIKHKLTK.

This is an uncharacterized protein from Acanthamoeba polyphaga mimivirus (APMV).